The sequence spans 743 residues: Dolichyl-phosphooligosaccharide-protein glycotransferase 2 (743 aa).

The Cytoplasmic portion of the chain corresponds to 1–7 (MKIDKRL). The helical transmembrane segment at 8–28 (MVIVAIATLFRMIPFRLKYLV) threads the bilayer. Positions 29 to 31 (GSD) match the DXD motif 1 motif. Residues 29–91 (GSDPYFHLAY…FSFLGISLYT (63 aa)) are Extracellular-facing. Aspartate 31 is a Mn(2+) binding site. A helical transmembrane segment spans residues 92–112 (AFRVTPVIFGVLTVVFFYLSL). The Cytoplasmic segment spans residues 113 to 119 (KKLYNRD). Residues 120-140 (VAFIVGLFLGVNYGHIFRSMA) traverse the membrane as a helical segment. Residues 141–144 (NYYR) are Extracellular-facing. 2 residues coordinate Mn(2+): arginine 144 and aspartate 146. The DXD motif 2 motif lies at 144-146 (RGD). Residues 145–165 (GDNYMLFWYSVALLGIALGLK) traverse the membrane as a helical segment. Topologically, residues 166–170 (TRSKY) are cytoplasmic. 2 consecutive transmembrane segments (helical) span residues 171–191 (RYLFYLLPGIATGFASAFWQA) and 192–212 (YYPIFVFVLAGGLLLGVYAYL). At 213–216 (KSPK) the chain is on the cytoplasmic side. A helical transmembrane segment spans residues 217–237 (LFLDSILIVLSTGLGVLIANI). The Extracellular segment spans residues 238 to 272 (LGDKVGYGMLGYTDWMGKKVAETFGLEFGFIKDAY). Residues 273–293 (LLIHVKYLLPLSLVFLGFLII) form a helical membrane-spanning segment. Topologically, residues 294 to 302 (TKKLNPKIK) are cytoplasmic. The chain crosses the membrane as a helical span at residues 303–323 (VGVLVGGSILAFIVMLVKFPA). Over 324-345 (LKDLSTGFGTFREVPISETLPP) the chain is Extracellular. The TIXE motif motif lies at 333–336 (TFRE). A helical membrane pass occupies residues 346-366 (TLDDLWRAYNIAIFLAALYIL). Residues 367 to 373 (RLRKIRS) lie on the Cytoplasmic side of the membrane. Residues 374-391 (GDAILLGYVITSLWMLRY) form a helical membrane-spanning segment. Residues 392–394 (WTR) are Extracellular-facing. A glycophospholipid is bound at residue arginine 394. A helical transmembrane segment spans residues 395–415 (FLFTAAPAVAFLSGIGVYELT). The Cytoplasmic segment spans residues 416–424 (RRIKENKIR). A helical transmembrane segment spans residues 425-445 (ITSLGVVILLSSAFSLGEVYS). Over 446–743 (VKPFMNENWE…LDRGIVRVKN (298 aa)) the chain is Extracellular. The tract at residues 474 to 476 (WWD) is interacts with target acceptor peptide in protein substrate. Residues 474–478 (WWDWG) carry the WWDYG motif motif. The DK motif motif lies at 526–533 (DILKFEAI).

Belongs to the STT3 family. The cofactor is Mn(2+). Mg(2+) is required as a cofactor.

It is found in the cell membrane. It carries out the reaction an archaeal dolichyl phosphooligosaccharide + [protein]-L-asparagine = an archaeal dolichyl phosphate + a glycoprotein with the oligosaccharide chain attached by N-beta-D-glycosyl linkage to a protein L-asparagine.. It functions in the pathway protein modification; protein glycosylation. Functionally, oligosaccharyl transferase (OST) that catalyzes the initial transfer of a defined glycan (ManNAcXyl(2)GlcAMan(2)GalNAc in P.furiosus) from the lipid carrier dolichol-monophosphate to an asparagine residue within an Asn-X-Ser/Thr consensus motif in nascent polypeptide chains, the first step in protein N-glycosylation. The protein is Dolichyl-phosphooligosaccharide-protein glycotransferase 2 (aglB2) of Pyrococcus furiosus (strain ATCC 43587 / DSM 3638 / JCM 8422 / Vc1).